Reading from the N-terminus, the 283-residue chain is MDIIKTTGQMQQWSERVRKQGKTICLVPTMGYFHDGHLSLMDAGRTQADHLVVSLFVNPIQFGANEDLDAYPTDHDRDFKLAELKGAAVVFAPGPEELYPPGFQTAVTLSQLPLHLCGLSRPVHFQGVATVVTKLFNIVGPDVAVFGSKDFQQLQVIRRLVKDLNFNIRIMGCPIVREADGLAMSSRNLYLSADERNSALSLSCSLALAAEMVQAGETRCRPIIAAVEKFILGHQGTQVDYVCLCDPLTLEAVDTITSPVLLALAVQVGTTRLIDNQVIDPEQ.

Position 30-37 (30-37 (MGYFHDGH)) interacts with ATP. H37 (proton donor) is an active-site residue. A (R)-pantoate-binding site is contributed by Q61. A beta-alanine-binding site is contributed by Q61. An ATP-binding site is contributed by 147–150 (GSKD). Q153 is a (R)-pantoate binding site. Residues V176 and 184 to 187 (MSSR) contribute to the ATP site.

Belongs to the pantothenate synthetase family. In terms of assembly, homodimer.

Its subcellular location is the cytoplasm. It carries out the reaction (R)-pantoate + beta-alanine + ATP = (R)-pantothenate + AMP + diphosphate + H(+). Its pathway is cofactor biosynthesis; (R)-pantothenate biosynthesis; (R)-pantothenate from (R)-pantoate and beta-alanine: step 1/1. Functionally, catalyzes the condensation of pantoate with beta-alanine in an ATP-dependent reaction via a pantoyl-adenylate intermediate. This is Pantothenate synthetase from Desulforapulum autotrophicum (strain ATCC 43914 / DSM 3382 / VKM B-1955 / HRM2) (Desulfobacterium autotrophicum).